We begin with the raw amino-acid sequence, 490 residues long: Cysteine protease 1 (490 aa).

A signal peptide spans 1–31 (MAGGGGKSVAAALAMACFLLILAAFAPPAAA). The propeptide at 32–154 (APPDIMSIIR…EAYRHDGVEA (123 aa)) is activation peptide. 5 disulfides stabilise this stretch: Cys-177/Cys-220, Cys-211/Cys-253, Cys-311/Cys-364, Cys-395/Cys-407, and Cys-401/Cys-422. Residue Cys-180 is part of the active site. Residues His-317 and Asn-339 contribute to the active site. N-linked (GlcNAc...) asparagine glycosylation is present at Asn-356. Positions 379–490 (NPKPSPPSPA…FVVLNREDLV (112 aa)) are cleaved as a propeptide — removed in mature form.

This sequence belongs to the peptidase C1 family. In terms of tissue distribution, highly expressed in the tapetum and developing pollen of the anther locules. Weakly expressed in root and germinating seed, hardly in the anther-less-flower and not detected in leaf.

In terms of biological role, cysteine protease that may play a role in pollen development. May be regulated by the transcription factor UDT1 in developing anthers and play a role in tapetum development. Positively regulated by the transcription factor TDR in developing anthers and may play a role in tapetum programmed cell death (PCD). This chain is Cysteine protease 1 (CP1), found in Oryza sativa subsp. japonica (Rice).